The following is a 640-amino-acid chain: Threonine--tRNA ligase (640 aa).

Residues 1–61 (MPTITLPDGS…ERDASLQIIT (61 aa)) enclose the TGS domain. The catalytic stretch occupies residues 242 to 533 (DHRRIGKQLD…LIEHYAGAFP (292 aa)). Cysteine 333, histidine 384, and histidine 510 together coordinate Zn(2+).

It belongs to the class-II aminoacyl-tRNA synthetase family. Homodimer. The cofactor is Zn(2+).

It is found in the cytoplasm. It carries out the reaction tRNA(Thr) + L-threonine + ATP = L-threonyl-tRNA(Thr) + AMP + diphosphate + H(+). Catalyzes the attachment of threonine to tRNA(Thr) in a two-step reaction: L-threonine is first activated by ATP to form Thr-AMP and then transferred to the acceptor end of tRNA(Thr). Also edits incorrectly charged L-seryl-tRNA(Thr). In Stutzerimonas stutzeri (strain A1501) (Pseudomonas stutzeri), this protein is Threonine--tRNA ligase.